The sequence spans 352 residues: MAGCGEIDHSLNMLPTNKKASETCSNTAPSLTVPECAICLQTCVHPVSLPCKHVFCYLCVKGASWLGKRCALCRQEIPEDFLDKPTLLSPEELKAASRGNGEYVWYYEGRNGWWQYDERTSRELEDAFSKGKKNTEMLIAGFLYVADLENMVQYRRNEHGRRRKIKRDIIDIPKKGVAGLRLDCDSNTVNLARESSADGADSGSAHTGASVQLPVPSSTRPLTSVDGQLTSPVTPSPDAGASLEDSFAHLQLSGDSIAERSHRGEGEEDHESPSSGRVPDTSTEETESDASSDIEDAPVVVAQHSLTQQRLLVSSANQTVAERSDRPVAGGGTMSVNVRSRRPDGQCTVTEV.

Residues C36 to R74 form an RING-type zinc finger. Residues K84 and K94 each participate in a glycyl lysine isopeptide (Lys-Gly) (interchain with G-Cter in ubiquitin) cross-link. Residues E91 to R167 form the WWE domain. A glycoprotein is bound by residues Y107, R110, and W114. K130 participates in a covalent cross-link: Glycyl lysine isopeptide (Lys-Gly) (interchain with G-Cter in ubiquitin). A glycoprotein is bound by residues Y144, Q153, R163, and K175. A Glycyl lysine isopeptide (Lys-Gly) (interchain with G-Cter in ubiquitin) cross-link involves residue K175. 3 disordered regions span residues S195–S242, E259–D293, and N317–V352. Residues A197–S210 show a composition bias toward low complexity. A compositionally biased stretch (polar residues) spans V215–V233. Residues S282–D293 show a composition bias toward acidic residues. S288 and S292 each carry phosphoserine.

In terms of assembly, can form homooligomers. Interacts with PARsylated AXIN1, AXIN2, BLZF1, CASC3, H1-2, IPO7, LIG3, NCL, PARP1, XRCC1, XRCC5 and XRCC6. Interacts with DDB1, DHX15, IQGAP1, LRPPRC, PARP2, PRKDC, RUVBL2, TNKS1 and TNKS2. Binding often leads to interactor ubiquitination, in the presence of the appropriate E1 and E2 enzymes, and proteasomal degradation. In terms of processing, ubiquitinated; autoubiquitinated. Autoubiquitination is enhanced upon poly(ADP-ribose)-binding.

Its subcellular location is the cytoplasm. The protein localises to the cytosol. It localises to the nucleus. The catalysed reaction is S-ubiquitinyl-[E2 ubiquitin-conjugating enzyme]-L-cysteine + [acceptor protein]-L-lysine = [E2 ubiquitin-conjugating enzyme]-L-cysteine + N(6)-ubiquitinyl-[acceptor protein]-L-lysine.. It functions in the pathway protein modification; protein ubiquitination. In terms of biological role, E3 ubiquitin-protein ligase that specifically binds poly-ADP-ribosylated (PARsylated) proteins and mediates their ubiquitination and subsequent degradation. May regulate many important biological processes, such as cell survival and DNA damage response. Acts as an activator of the Wnt signaling pathway by mediating the ubiquitination of PARsylated AXIN1 and AXIN2, 2 key components of the beta-catenin destruction complex. Acts in cooperation with tankyrase proteins (TNKS and TNKS2), which mediate PARsylation of target proteins AXIN1, AXIN2, BLZF1, CASC3, TNKS and TNKS2. Recognizes and binds tankyrase-dependent PARsylated proteins via its WWE domain and mediates their ubiquitination, leading to their degradation. Different ubiquitin linkage types have been observed: TNKS2 undergoes ubiquitination at 'Lys-48' and 'Lys-63', while AXIN1 is only ubiquitinated at 'Lys-48'. May regulate TNKS and TNKS2 subcellular location, preventing aggregation at a centrosomal location. Neuroprotective protein. Protects the brain against N-methyl-D-aspartate (NMDA) receptor-mediated glutamate excitotoxicity and ischemia, by interfering with PAR-induced cell death, called parthanatos. Prevents nuclear translocation of AIFM1 in a PAR-binding dependent manner. Does not affect PARP1 activation. Protects against cell death induced by DNA damaging agents, such as N-methyl-N-nitro-N-nitrosoguanidine (MNNG) and rescues cells from G1 arrest. Promotes cell survival after gamma-irradiation. Facilitates DNA repair. In Rattus norvegicus (Rat), this protein is E3 ubiquitin-protein ligase RNF146 (Rnf146).